The sequence spans 106 residues: Ig kappa-b4 chain C region (106 aa).

The Ig-like domain occupies 6 to 99 (PSVLLFPPSK…VQGSASPIVQ (94 aa)). A disulfide bridge links Cys-27 with Cys-87. Positions 48 to 64 (QQSGIENSKTPQSPEDN) are enriched in polar residues. Residues 48 to 67 (QQSGIENSKTPQSPEDNTYS) are disordered.

The polypeptide is Ig kappa-b4 chain C region (K-BAS) (Oryctolagus cuniculus (Rabbit)).